Consider the following 163-residue polypeptide: Lipoprotein signal peptidase (163 aa).

4 consecutive transmembrane segments (helical) span residues 9–29, 42–62, 67–87, and 93–113; these read AWPWLWFSVLVILLDQLSKYL, ILPFLNFTLNYNTGAAFSFLG, WQIIFFAAISFVVSIFLILWL, and SEIMMSLGLSLIIGGALGNFI. Catalysis depends on residues Asp-123 and Asp-141. A helical transmembrane segment spans residues 137 to 157; it reads FNVADSAICVGVFLLIVHMLL.

This sequence belongs to the peptidase A8 family.

Its subcellular location is the cell inner membrane. It catalyses the reaction Release of signal peptides from bacterial membrane prolipoproteins. Hydrolyzes -Xaa-Yaa-Zaa-|-(S,diacylglyceryl)Cys-, in which Xaa is hydrophobic (preferably Leu), and Yaa (Ala or Ser) and Zaa (Gly or Ala) have small, neutral side chains.. Its pathway is protein modification; lipoprotein biosynthesis (signal peptide cleavage). Functionally, this protein specifically catalyzes the removal of signal peptides from prolipoproteins. This is Lipoprotein signal peptidase from Coxiella burnetii (strain RSA 331 / Henzerling II).